The sequence spans 548 residues: Esterase-5A (548 aa).

Residues 1 to 21 form the signal peptide; sequence MHLVRWLICLIQLWVQLGAAG. An intrachain disulfide couples Cys-87 to Cys-106. 2 N-linked (GlcNAc...) asparagine glycosylation sites follow: Asn-95 and Asn-116. Ser-210 serves as the catalytic Acyl-ester intermediate. A disulfide bridge links Cys-262 with Cys-274. N-linked (GlcNAc...) asparagine glycosylation occurs at Asn-479. Cysteines 518 and 539 form a disulfide.

This sequence belongs to the type-B carboxylesterase/lipase family.

It is found in the secreted. The catalysed reaction is a carboxylic ester + H2O = an alcohol + a carboxylate + H(+). The chain is Esterase-5A (Est-5A) from Drosophila pseudoobscura pseudoobscura (Fruit fly).